Here is a 553-residue protein sequence, read N- to C-terminus: Threonylcarbamoyladenosine tRNA methylthiotransferase (553 aa).

The disordered stretch occupies residues 21–61 (SAEDVKPQERYQNKKSVTVRAKKRVQIKPETDAEEKPTPRP). Basic and acidic residues-rich tracts occupy residues 23–32 (EDVKPQERYQ) and 47–58 (IKPETDAEEKPT). The MTTase N-terminal domain occupies 72–179 (QKVFVKTWGC…VVEVVEETLK (108 aa)). Positions 81, 116, 145, 221, 225, and 228 each coordinate [4Fe-4S] cluster. The Radical SAM core domain maps to 207 to 438 (RKNPLIEIIS…DLFYSYEPYA (232 aa)). Residues 438 to 500 (AQRVGEMYTV…KFSMVGEILD (63 aa)) form the TRAM domain. The chain crosses the membrane as a helical span at residues 533-553 (VGIALVVGSLAFLLQLLIRFL).

It belongs to the methylthiotransferase family. CDKAL1 subfamily. Requires [4Fe-4S] cluster as cofactor.

Its subcellular location is the membrane. The enzyme catalyses N(6)-L-threonylcarbamoyladenosine(37) in tRNA + (sulfur carrier)-SH + AH2 + 2 S-adenosyl-L-methionine = 2-methylsulfanyl-N(6)-L-threonylcarbamoyladenosine(37) in tRNA + (sulfur carrier)-H + 5'-deoxyadenosine + L-methionine + A + S-adenosyl-L-homocysteine + 2 H(+). In terms of biological role, catalyzes the methylthiolation of N6-threonylcarbamoyladenosine (t(6)A), leading to the formation of 2-methylthio-N6-threonylcarbamoyladenosine (ms(2)t(6)A) at position 37 in tRNAs that read codons beginning with adenine. The sequence is that of Threonylcarbamoyladenosine tRNA methylthiotransferase from Drosophila pseudoobscura pseudoobscura (Fruit fly).